A 1073-amino-acid chain; its full sequence is MPKRTDIKSILILGAGPIVIGQACEFDYSGAQACKALREEGYRVILVNSNPATIMTDPEMADATYIEPIHWEVVRKIIEKERPDAVLPTMGGQTALNCALELERQGVLEEFGVTMIGATADAIDKAEDRRRFDVAMKKIGLETARSGIAHTMEEALAVAADVGFPCIIRPSFTMGGSGGGIAYNREEFEEICARGLDLSPTKELLIDESLIGWKEYEMEVVRDKNDNCIIVCSIENFDAMGIHTGDSITVAPAQTLTDKEYQIMRNASMAVLREIGVETGGSNVQFAVNPKNGRLIVIEMNPRVSRSSALASKATGFPIAKVAAKLAVGYTLDELMNDITGGRTPASFEPSIDYVVTKIPRFNFEKFAGANDRLTTQMKSVGEVMAIGRTQQESLQKALRGLEVGATGFDPKVSLDDPEALTKIRRELKDAGADRIWYIADAFRAGLSVDGVFNLTNIDRWFLVQIEELVRLEEKVAEVGITGLNADFLRQLKRKGFADARLAKLAGVREAEIRKLRDQYDLHPVYKRVDTCAAEFATDTAYMYSTYEEECEANPSTDREKIMVLGGGPNRIGQGIEFDYCCVHASLALREDGYETIMVNCNPETVSTDYDTSDRLYFEPVTLEDVLEIVRIEKPKGVIVQYGGQTPLKLARALEAAGVPVIGTSPDAIDRAEDRERFQHAVERLKLKQPANATVTAIEMAVEKAKEIGYPLVVRPSYVLGGRAMEIVYDEADLRRYFQTAVSVSNDAPVLLDHFLDDAVEVDVDAICDGEMVLIGGIMEHIEQAGVHSGDSACSLPAYTLSQEIQDVMRQQVQKLAFELQVRGLMNVQFAVKNNEVYLIEVNPRAARTVPFVSKATGVPLAKVAARVMAGKSLAEQGVTKEVIPPYYSVKEVVLPFNKFPGVDPLLGPEMRSTGEVMGVGRTFAEAFAKAQLGSNSTMKKHGRALLSVREGDKERVVDLAAKLLKQGFELDATHGTAIVLGEAGINPRLVNKVHEGRPHIQDRIKNGEYTYIINTTSGRRAIEDSRVIRRSALQYKVHYDTTLNGGFATAMALNADATEKVISVQEMHAQIK.

Residues 2 to 403 (PKRTDIKSIL…SLQKALRGLE (402 aa)) form a carboxyphosphate synthetic domain region. ATP-binding residues include Arg129, Arg169, Gly175, Gly176, Glu208, Leu210, Glu215, Gly241, Ile242, His243, Gln285, and Glu299. The region spanning 133 to 328 (DVAMKKIGLE…IAKVAAKLAV (196 aa)) is the ATP-grasp 1 domain. Mg(2+)-binding residues include Gln285, Glu299, and Asn301. Mn(2+)-binding residues include Gln285, Glu299, and Asn301. Positions 404–553 (VGATGFDPKV…YSTYEEECEA (150 aa)) are oligomerization domain. Residues 554–936 (NPSTDREKIM…AFAKAQLGSN (383 aa)) form a carbamoyl phosphate synthetic domain region. One can recognise an ATP-grasp 2 domain in the interval 679–870 (QHAVERLKLK…LAKVAARVMA (192 aa)). 10 residues coordinate ATP: Arg715, His754, Leu756, Glu761, Gly786, Val787, His788, Ser789, Gln829, and Glu841. Positions 829, 841, and 843 each coordinate Mg(2+). Mn(2+)-binding residues include Gln829, Glu841, and Asn843. Residues 937-1073 (STMKKHGRAL…SVQEMHAQIK (137 aa)) form the MGS-like domain. Residues 937-1073 (STMKKHGRAL…SVQEMHAQIK (137 aa)) are allosteric domain.

The protein belongs to the CarB family. Composed of two chains; the small (or glutamine) chain promotes the hydrolysis of glutamine to ammonia, which is used by the large (or ammonia) chain to synthesize carbamoyl phosphate. Tetramer of heterodimers (alpha,beta)4. Mg(2+) serves as cofactor. Mn(2+) is required as a cofactor.

The catalysed reaction is hydrogencarbonate + L-glutamine + 2 ATP + H2O = carbamoyl phosphate + L-glutamate + 2 ADP + phosphate + 2 H(+). It catalyses the reaction hydrogencarbonate + NH4(+) + 2 ATP = carbamoyl phosphate + 2 ADP + phosphate + 2 H(+). It functions in the pathway amino-acid biosynthesis; L-arginine biosynthesis; carbamoyl phosphate from bicarbonate: step 1/1. Its pathway is pyrimidine metabolism; UMP biosynthesis via de novo pathway; (S)-dihydroorotate from bicarbonate: step 1/3. Large subunit of the glutamine-dependent carbamoyl phosphate synthetase (CPSase). CPSase catalyzes the formation of carbamoyl phosphate from the ammonia moiety of glutamine, carbonate, and phosphate donated by ATP, constituting the first step of 2 biosynthetic pathways, one leading to arginine and/or urea and the other to pyrimidine nucleotides. The large subunit (synthetase) binds the substrates ammonia (free or transferred from glutamine from the small subunit), hydrogencarbonate and ATP and carries out an ATP-coupled ligase reaction, activating hydrogencarbonate by forming carboxy phosphate which reacts with ammonia to form carbamoyl phosphate. This Escherichia coli (strain K12) protein is Carbamoyl phosphate synthase large chain.